The primary structure comprises 254 residues: 3-deoxy-manno-octulosonate cytidylyltransferase (254 aa).

This sequence belongs to the KdsB family.

It localises to the cytoplasm. It catalyses the reaction 3-deoxy-alpha-D-manno-oct-2-ulosonate + CTP = CMP-3-deoxy-beta-D-manno-octulosonate + diphosphate. It participates in nucleotide-sugar biosynthesis; CMP-3-deoxy-D-manno-octulosonate biosynthesis; CMP-3-deoxy-D-manno-octulosonate from 3-deoxy-D-manno-octulosonate and CTP: step 1/1. It functions in the pathway bacterial outer membrane biogenesis; lipopolysaccharide biosynthesis. In terms of biological role, activates KDO (a required 8-carbon sugar) for incorporation into bacterial lipopolysaccharide in Gram-negative bacteria. The polypeptide is 3-deoxy-manno-octulosonate cytidylyltransferase (Pseudomonas aeruginosa (strain UCBPP-PA14)).